A 223-amino-acid polypeptide reads, in one-letter code: MDLATLRAQQIELASNVVREDRLNVDPPTIIGGADVGFEQGGEVTRAAMVLLKYPSLELLEYQVARIPTTMPYIPGFLSFREYPALLTAWEMLSRKPDLLFVDGHGISHPRRLGVASHFGMLVDVPTIGVAKKRLCGKFEPLSDEPGAVSPLMDKGEQLAWVWRSKARCNPLFVSTGHRVSIDTALGWVQRCTKGYRLPEPTRWADAVASGRPAFLRWQEIQG.

Asp35 and Asp103 together coordinate Mg(2+).

It belongs to the endonuclease V family. Mg(2+) serves as cofactor.

The protein localises to the cytoplasm. It catalyses the reaction Endonucleolytic cleavage at apurinic or apyrimidinic sites to products with a 5'-phosphate.. In terms of biological role, DNA repair enzyme involved in the repair of deaminated bases. Selectively cleaves double-stranded DNA at the second phosphodiester bond 3' to a deoxyinosine leaving behind the intact lesion on the nicked DNA. The sequence is that of Endonuclease V from Cronobacter sakazakii (strain ATCC BAA-894) (Enterobacter sakazakii).